Here is a 689-residue protein sequence, read N- to C-terminus: DNA ligase (689 aa).

NAD(+)-binding positions include 51-55 (DSEYD), 100-101 (SL), and glutamate 129. Lysine 131 acts as the N6-AMP-lysine intermediate in catalysis. NAD(+) is bound by residues arginine 152, glutamate 189, lysine 308, and lysine 332. Zn(2+) contacts are provided by cysteine 426, cysteine 429, cysteine 444, and cysteine 450. A BRCT domain is found at 609–689 (ADEQPLKGQT…ELLALLAANS (81 aa)).

It belongs to the NAD-dependent DNA ligase family. LigA subfamily. The cofactor is Mg(2+). Mn(2+) is required as a cofactor.

The catalysed reaction is NAD(+) + (deoxyribonucleotide)n-3'-hydroxyl + 5'-phospho-(deoxyribonucleotide)m = (deoxyribonucleotide)n+m + AMP + beta-nicotinamide D-nucleotide.. In terms of biological role, DNA ligase that catalyzes the formation of phosphodiester linkages between 5'-phosphoryl and 3'-hydroxyl groups in double-stranded DNA using NAD as a coenzyme and as the energy source for the reaction. It is essential for DNA replication and repair of damaged DNA. The protein is DNA ligase of Shewanella sp. (strain ANA-3).